A 1065-amino-acid polypeptide reads, in one-letter code: MKHWKKMAASLIAISTMVAVVPTTYAMESEDSQPQTTDTATVQTTKAAEPTLLASWDFTGKNGTTNSAIADSTGKYNLTLKDGAKIEQYGDRSNNEALSLRGDGQYAQIDDQLFKDAGDSFTLEFASKTRHDDSGKFFSFIVGKDGSNDANTTDQANANKYLMFYNSKTAIKGVISNNNWGNEQGSKVTVSGNDNSWADYKIVVDGTNLAVFRNNALIIFKANTGIKMSDLGATTAYIGKSFYSVDEYWNGAMDDIKVYRGADLTMPTAVAISGTGVVNNKLTLIEKDSTKLTATVTPDDAVSKNVTWSSSDESVAKVAADGTVTGVKAGTATITATTELGGVKAELPVTVEPMNAQNAAAADLDAAIAALKVPAAENLPLVAKGTKNGSAITWKSSDEKLITSTNEKYENRTTGADDPYRGAGIINRPAYGDGDSKPVTLTATASYNGGEKVTKTIEVTVKEKTRIAPDTGYAAVTFESDSNGGEKAWVASTEKNDFFTFKTRNNGQAVLTNDADTGGLRDMFVLRSHEGDKYYLIATDLKVSSMGWSQNQVNGSRKVEVYESTDMMNWTRTNGDGNGGITINTPNAGMTWAPEAYWDDDLNAYVVFFSSRMFTDDTRTTPVKNDKTGNSSYAQVRYAITRDFVNFTEPQMWQDTGYSRIDSTVRKIGGYYYRFTKNEQGGAAGDYITTGKSIFLERSKVLTAPTTEASPGQDPNTGWQLLEQALLPFEGPETIKLNKDDELNTKDDDGYILLSDNFAYRAFMTTGAELSKTTWDNPMTKRYPDFNNEKKPVKAEPGAQGYITQGANGGLPDKVRHGAFVNVPESVLKVTKSWTAANPTHIEAVDSTTKAVYNAGTRELTATVTSADKGTLAGSVKFSAGDWSKTVKLDAEGKATVTLPASVSGTVAVAYDGYTDGLVNPSDTTVDGIEQGKVDLAELNKQIAAAEALKESDYTADSWAKLAAALKTAKAALAAENQGEVDTAAADLKTAIEALQKAPTNPGEGDGDKGDGNKPTTPTTGDKTNVNKPGSALSNTGTAVLGLGGAVVALAIAGISLTLWRKRRA.

The signal sequence occupies residues 1-26 (MKHWKKMAASLIAISTMVAVVPTTYA). The region spanning 277–346 (VVNNKLTLIE…TTELGGVKAE (70 aa)) is the BIG2 domain. The segment at 997-1031 (KAPTNPGEGDGDKGDGNKPTTPTTGDKTNVNKPGS) is disordered. The segment covering 1014–1031 (KPTTPTTGDKTNVNKPGS) has biased composition (polar residues). Residues 1040–1060 (VLGLGGAVVALAIAGISLTLW) form a helical membrane-spanning segment.

This sequence belongs to the glycosyl hydrolase 43 family.

Its subcellular location is the cell membrane. It carries out the reaction Hydrolysis of terminal non-reducing alpha-L-arabinofuranoside residues in alpha-L-arabinosides.. Functionally, involved in the type II arabinogalactan (AG) side chains degradation. Releases arabinofuranose (Araf) from alpha-1,3-Araf-substituted beta-1,6-galactooligosaccharides. Can use radish root AGP, larch AG and arabinan. Shows weaker activity with gum arabic and arabinoxylan. This is Alpha-L-arabinofuranosidase from Bifidobacterium longum subsp. longum (strain ATCC 15707 / DSM 20219 / JCM 1217 / NCTC 11818 / E194b).